We begin with the raw amino-acid sequence, 487 residues long: MDPVVVLVLGLCCLLLLSIWKQNSGRGKLPPGPTPFPIIGNILQIDAKDISKSLTKFSECYGPVFTVYLGMKPTVVLHGYEAVKEALVDLGEEFAGRGSVPILEKVSKGLGIAFSNAKTWKEMRRFSLMTLRNFGMGKRSIEDRIQEEARCLVEELRKTNASPCDPTFILGCAPCNVICSVIFHNRFDYKDEEFLKLMESLNENVRILSSPWLQVYNNFPALLDYFPGIHKTLLKNADYIKNFIMEKVKEHQKLLDVNNPRDFIDCFLIKMEQENNLEFTLESLVIAVSDLFGAGTETTSTTLRYSLLLLLKHPEVAARVQEEIERVIGRHRSPCMQDRSRMPYTDAVIHEIQRFIDLLPTNLPHAVTRDVRFRNYFIPKGTDIITSLTSVLHDEKAFPNPKVFDPGHFLDESGNFKKSDYFMPFSAGKRMCVGEGLARMELFLFLTSILQNFKLQSLVEPKDLDITAVVNGFVSVPPSYQLCFIPI.

Position 432 (Cys-432) interacts with heme.

It belongs to the cytochrome P450 family. Requires heme as cofactor.

Its subcellular location is the endoplasmic reticulum membrane. The protein localises to the microsome membrane. It carries out the reaction an organic molecule + reduced [NADPH--hemoprotein reductase] + O2 = an alcohol + oxidized [NADPH--hemoprotein reductase] + H2O + H(+). In terms of biological role, cytochromes P450 are a group of heme-thiolate monooxygenases. In liver microsomes, this enzyme is involved in an NADPH-dependent electron transport pathway. It oxidizes a variety of structurally unrelated compounds, including steroids, fatty acids, and xenobiotics. The protein is Cytochrome P450 2C5 (CYP2C5) of Oryctolagus cuniculus (Rabbit).